We begin with the raw amino-acid sequence, 217 residues long: Probable transaldolase (217 aa).

The active-site Schiff-base intermediate with substrate is the lysine 83.

It belongs to the transaldolase family. Type 3B subfamily.

The protein resides in the cytoplasm. The catalysed reaction is D-sedoheptulose 7-phosphate + D-glyceraldehyde 3-phosphate = D-erythrose 4-phosphate + beta-D-fructose 6-phosphate. It participates in carbohydrate degradation; pentose phosphate pathway; D-glyceraldehyde 3-phosphate and beta-D-fructose 6-phosphate from D-ribose 5-phosphate and D-xylulose 5-phosphate (non-oxidative stage): step 2/3. Transaldolase is important for the balance of metabolites in the pentose-phosphate pathway. The chain is Probable transaldolase from Jannaschia sp. (strain CCS1).